The chain runs to 144 residues: UPF0306 protein Spro_0510 (144 aa).

It belongs to the UPF0306 family.

The sequence is that of UPF0306 protein Spro_0510 from Serratia proteamaculans (strain 568).